Reading from the N-terminus, the 345-residue chain is MTLSLQDFDYDLPPDLIAQAPLAERSASRLLVVDGDVLADRRFVDLPDFIRPGDLLVFNDTRVLHARLFGVKATGGQVEVLVERPIGAHEALAQIRASKSPKPGSTLRLADAVDVTVLGRSGEFFHLRFPDDENVVDVLERYGKLPLPPYIQRAAGDADEARYQTVFARAPGSVAAPTAGLHFDDAVLDRLRARGAGCAWVTLHVGAGTFQPVRVDDLAQHRMHSERYVIPQETVEAIARTRANGGRVVAVGTTSMRALEAAAQAGPLAAGSGETDIFILPGFRFRVADMLVTNFHLPKSTLLMLVSAFSGTDVIRRAYAHAVASRYRFFSYGDAMLLTRNDHAI.

Belongs to the QueA family. Monomer.

The protein localises to the cytoplasm. The enzyme catalyses 7-aminomethyl-7-carbaguanosine(34) in tRNA + S-adenosyl-L-methionine = epoxyqueuosine(34) in tRNA + adenine + L-methionine + 2 H(+). Its pathway is tRNA modification; tRNA-queuosine biosynthesis. Its function is as follows. Transfers and isomerizes the ribose moiety from AdoMet to the 7-aminomethyl group of 7-deazaguanine (preQ1-tRNA) to give epoxyqueuosine (oQ-tRNA). In Azoarcus sp. (strain BH72), this protein is S-adenosylmethionine:tRNA ribosyltransferase-isomerase.